The primary structure comprises 703 residues: Elongation factor G (703 aa).

Residues 9-292 form the tr-type G domain; that stretch reads ERTRNIGIMA…AVVDYLPGPL (284 aa). GTP is bound by residues 18–25, 91–95, and 145–148; these read AHIDAGKT, DTPGH, and NKMD.

Belongs to the TRAFAC class translation factor GTPase superfamily. Classic translation factor GTPase family. EF-G/EF-2 subfamily.

It is found in the cytoplasm. Its function is as follows. Catalyzes the GTP-dependent ribosomal translocation step during translation elongation. During this step, the ribosome changes from the pre-translocational (PRE) to the post-translocational (POST) state as the newly formed A-site-bound peptidyl-tRNA and P-site-bound deacylated tRNA move to the P and E sites, respectively. Catalyzes the coordinated movement of the two tRNA molecules, the mRNA and conformational changes in the ribosome. This Leuconostoc mesenteroides subsp. mesenteroides (strain ATCC 8293 / DSM 20343 / BCRC 11652 / CCM 1803 / JCM 6124 / NCDO 523 / NBRC 100496 / NCIMB 8023 / NCTC 12954 / NRRL B-1118 / 37Y) protein is Elongation factor G.